The primary structure comprises 179 residues: UPF0200 protein TV0279 (179 aa).

6–13 provides a ligand contact to ATP; sequence GMPGAGKD.

It belongs to the UPF0200 family.

This Thermoplasma volcanium (strain ATCC 51530 / DSM 4299 / JCM 9571 / NBRC 15438 / GSS1) protein is UPF0200 protein TV0279.